The sequence spans 141 residues: Small ribosomal subunit protein uS11 (141 aa).

It belongs to the universal ribosomal protein uS11 family. In terms of assembly, part of the 30S ribosomal subunit.

Its function is as follows. Located on the platform of the 30S subunit. The protein is Small ribosomal subunit protein uS11 of Pyrobaculum calidifontis (strain DSM 21063 / JCM 11548 / VA1).